Consider the following 358-residue polypeptide: Membrane-bound lytic murein transglycosylase C (358 aa).

The first 16 residues, 1 to 16 (MKKILALLVIAPLLVS), serve as a signal peptide directing secretion. Residue C17 is the site of N-palmitoyl cysteine attachment. The S-diacylglycerol cysteine moiety is linked to residue C17.

It belongs to the transglycosylase Slt family.

It localises to the cell outer membrane. The enzyme catalyses Exolytic cleavage of the (1-&gt;4)-beta-glycosidic linkage between N-acetylmuramic acid (MurNAc) and N-acetylglucosamine (GlcNAc) residues in peptidoglycan, from either the reducing or the non-reducing ends of the peptidoglycan chains, with concomitant formation of a 1,6-anhydrobond in the MurNAc residue.. Murein-degrading enzyme. May play a role in recycling of muropeptides during cell elongation and/or cell division. This Yersinia enterocolitica serotype O:8 / biotype 1B (strain NCTC 13174 / 8081) protein is Membrane-bound lytic murein transglycosylase C.